The sequence spans 501 residues: Ribose import ATP-binding protein RbsA (501 aa).

2 ABC transporter domains span residues 5-241 (LQLK…VGRK) and 252-495 (APGD…VGKL). Residue 37–44 (GENGAGKS) coordinates ATP.

Belongs to the ABC transporter superfamily. Ribose importer (TC 3.A.1.2.1) family. In terms of assembly, the complex is composed of an ATP-binding protein (RbsA), two transmembrane proteins (RbsC) and a solute-binding protein (RbsB).

The protein localises to the cell inner membrane. It catalyses the reaction D-ribose(out) + ATP + H2O = D-ribose(in) + ADP + phosphate + H(+). Functionally, part of the ABC transporter complex RbsABC involved in ribose import. Responsible for energy coupling to the transport system. In Escherichia coli O6:H1 (strain CFT073 / ATCC 700928 / UPEC), this protein is Ribose import ATP-binding protein RbsA.